The sequence spans 291 residues: Potassium-transporting ATPase subunit beta (291 aa).

Residues methionine 1 to arginine 36 are Cytoplasmic-facing. A helical; Signal-anchor for type II membrane protein transmembrane segment spans residues tryptophan 37–leucine 57. Topologically, residues cysteine 58 to lysine 291 are extracellular. N-linked (GlcNAc...) asparagine glycans are attached at residues asparagine 99, asparagine 103, asparagine 130, asparagine 146, and asparagine 161. A disulfide bond links cysteine 131 and cysteine 152. Cysteine 162 and cysteine 178 are disulfide-bonded. Asparagine 193 and asparagine 222 each carry an N-linked (GlcNAc...) asparagine glycan. An immunoglobulin-like region spans residues glycine 194 to lysine 291. An intrachain disulfide couples cysteine 201 to cysteine 263.

It belongs to the X(+)/potassium ATPases subunit beta family. In terms of assembly, the ATPase pump is composed of two subunits: alpha (catalytic) and beta (regulatory). Interacts with alpha subunit ATP12A; this interaction is required for the formation of a functionally active pump and targeting at the plasma membrane. Interacts (via N-terminus) with alpha subunit ATP4A (via the P-domain). Post-translationally, N-glycosylation is necessary for assembly and functional expression of the pump at the plasma membrane.

The protein resides in the apical cell membrane. The protein localises to the cell membrane. The beta subunit of the gastric H(+)/K(+) ATPase pump which transports H(+) ions in exchange for K(+) ions across the apical membrane of parietal cells. Plays a structural and regulatory role in the assembly and membrane targeting of a functionally active pump. Within a transport cycle, the transfer of a H(+) ion across the membrane is coupled to ATP hydrolysis and is associated with a transient phosphorylation of the alpha subunit that shifts the pump conformation from inward-facing (E1) to outward-facing state (E2). Interacts with the phosphorylation domain of the alpha subunit and functions as a ratchet, stabilizing the lumenal-open E2 conformation and preventing the reverse reaction of the transport cycle. The polypeptide is Potassium-transporting ATPase subunit beta (Homo sapiens (Human)).